Consider the following 342-residue polypeptide: S-methyl-5'-thioadenosine phosphorylase (342 aa).

Residues T51, 99 to 100, and 132 to 133 each bind phosphate; these read RH and SA. M234 lines the substrate pocket. S235 contacts phosphate. 258 to 260 provides a ligand contact to substrate; it reads DYD.

The protein belongs to the PNP/MTAP phosphorylase family. MTAP subfamily. Homotrimer.

The protein resides in the cytoplasm. The protein localises to the nucleus. The catalysed reaction is S-methyl-5'-thioadenosine + phosphate = 5-(methylsulfanyl)-alpha-D-ribose 1-phosphate + adenine. The protein operates within amino-acid biosynthesis; L-methionine biosynthesis via salvage pathway; S-methyl-5-thio-alpha-D-ribose 1-phosphate from S-methyl-5'-thioadenosine (phosphorylase route): step 1/1. Catalyzes the reversible phosphorylation of S-methyl-5'-thioadenosine (MTA) to adenine and 5-methylthioribose-1-phosphate. Involved in the breakdown of MTA, a major by-product of polyamine biosynthesis. Responsible for the first step in the methionine salvage pathway after MTA has been generated from S-adenosylmethionine. Has broad substrate specificity with 6-aminopurine nucleosides as preferred substrates. The chain is S-methyl-5'-thioadenosine phosphorylase from Aspergillus fumigatus (strain ATCC MYA-4609 / CBS 101355 / FGSC A1100 / Af293) (Neosartorya fumigata).